Here is a 638-residue protein sequence, read N- to C-terminus: MKLRKAWLLVLLLALTQLLAAASAGDAHEDTSDTENATEEEEEEDDDDLEVKEENGVWVLNDGNFDNFVADKDTVLLEFYAPWCGHCKQFAPEYEKIASTLKDNDPPIAVAKIDATSASMLASKFDVSGYPTIKILKKGQAVDYDGSRTQEEIVAKVREVSQPDWTPPPEVTLSLTKDNFDDVVNNADIILVEFYAPWCGHCKKLAPEYEKAAKELSKRSPPIPLAKVDATEQTDLAKRFDVSGYPTLKIFRKGRPFDYNGPREKYGIVDYMIEQSGPPSKEILTLKQVQEFLKDGDDVVIIGLFQGDGDPAYLQYQDAANNLREDYKFHHTFSPEIAKFLKVSLGKLVLTHPEKFQSKYEPRFHVMDVQGSTEASAIKDYVVKHALPLVGHRKTSNDAKRYSKRPLVVVYYSVDFSFDYRAATQFWRNKVLEVAKDFPEYTFAIADEEDYATEVKDLGLSESGEDVNAAILDESGKKFAMEPEEFDSDTLREFVTAFKKGKLKPVIKSQPVPKNNKGPVKVVVGKTFDAIVMDPKKDVLIEFYAPWCGHCKQLEPIYTSLGKKYKGQKDLVIAKMDATANDITNDQYKVEGFPTIYFAPSGDKKNPIKFEGGNRDLEHLSKFIDEHATKRSRTKEEL.

An N-terminal signal peptide occupies residues 1–20 (MKLRKAWLLVLLLALTQLLA). Thioredoxin domains are found at residues 21 to 162 (AASA…EVSQ) and 162 to 294 (QPDW…EFLK). Positions 24-50 (AGDAHEDTSDTENATEEEEEEDDDDLE) are disordered. Acidic residues predominate over residues 32 to 50 (SDTENATEEEEEEDDDDLE). Asn36 carries N-linked (GlcNAc...) asparagine glycosylation. A CXXC motif is present at residues 84-87 (CGHC). Intrachain disulfides connect Cys84–Cys87 and Cys199–Cys202. Lys359 bears the N6-acetyllysine mark. Residues 498 to 629 (FKKGKLKPVI…LSKFIDEHAT (132 aa)) form the Thioredoxin 3 domain. The CXXC motif lies at 548 to 551 (CGHC). A disulfide bridge connects residues Cys548 and Cys551. The Prevents secretion from ER motif lies at 635-638 (KEEL).

The protein belongs to the protein disulfide isomerase family. In terms of assembly, part of a large chaperone multiprotein complex comprising DNAJB11, HSP90B1, HSPA5, HYOU, PDIA2, PDIA4, PDIA6, PPIB, SDF2L1, UGGT1 and very small amounts of ERP29, but not, or at very low levels, CALR nor CANX. Component of a complex containing at least CRELD2, MANF, MATN3 and PDIA4.

The protein resides in the endoplasmic reticulum lumen. The protein localises to the melanosome. It catalyses the reaction Catalyzes the rearrangement of -S-S- bonds in proteins.. This Mus musculus (Mouse) protein is Protein disulfide-isomerase A4 (Pdia4).